Consider the following 326-residue polypeptide: Aspartate carbamoyltransferase catalytic subunit (326 aa).

Positions 60 and 61 each coordinate carbamoyl phosphate. L-aspartate is bound at residue Lys-88. Residues Arg-110, His-143, and Gln-146 each coordinate carbamoyl phosphate. L-aspartate is bound by residues Arg-183 and Arg-239. Residues Gly-280 and Pro-281 each contribute to the carbamoyl phosphate site.

Belongs to the aspartate/ornithine carbamoyltransferase superfamily. ATCase family. In terms of assembly, heterododecamer (2C3:3R2) of six catalytic PyrB chains organized as two trimers (C3), and six regulatory PyrI chains organized as three dimers (R2).

It carries out the reaction carbamoyl phosphate + L-aspartate = N-carbamoyl-L-aspartate + phosphate + H(+). Its pathway is pyrimidine metabolism; UMP biosynthesis via de novo pathway; (S)-dihydroorotate from bicarbonate: step 2/3. Functionally, catalyzes the condensation of carbamoyl phosphate and aspartate to form carbamoyl aspartate and inorganic phosphate, the committed step in the de novo pyrimidine nucleotide biosynthesis pathway. The chain is Aspartate carbamoyltransferase catalytic subunit from Microcystis aeruginosa (strain NIES-843 / IAM M-2473).